Consider the following 319-residue polypeptide: Lipoyl synthase (319 aa).

The interval 6–29 is disordered; that stretch reads DTVSANPVRPRHPEKAARPDALSP. A compositionally biased stretch (basic and acidic residues) spans 16–29; sequence RHPEKAARPDALSP. 7 residues coordinate [4Fe-4S] cluster: Cys-61, Cys-66, Cys-72, Cys-87, Cys-91, Cys-94, and Ser-300. The 217-residue stretch at 73 to 289 folds into the Radical SAM core domain; the sequence is WDKKHATFMI…QTTAYAKGFL (217 aa).

It belongs to the radical SAM superfamily. Lipoyl synthase family. The cofactor is [4Fe-4S] cluster.

The protein localises to the cytoplasm. It carries out the reaction [[Fe-S] cluster scaffold protein carrying a second [4Fe-4S](2+) cluster] + N(6)-octanoyl-L-lysyl-[protein] + 2 oxidized [2Fe-2S]-[ferredoxin] + 2 S-adenosyl-L-methionine + 4 H(+) = [[Fe-S] cluster scaffold protein] + N(6)-[(R)-dihydrolipoyl]-L-lysyl-[protein] + 4 Fe(3+) + 2 hydrogen sulfide + 2 5'-deoxyadenosine + 2 L-methionine + 2 reduced [2Fe-2S]-[ferredoxin]. The protein operates within protein modification; protein lipoylation via endogenous pathway; protein N(6)-(lipoyl)lysine from octanoyl-[acyl-carrier-protein]: step 2/2. Its function is as follows. Catalyzes the radical-mediated insertion of two sulfur atoms into the C-6 and C-8 positions of the octanoyl moiety bound to the lipoyl domains of lipoate-dependent enzymes, thereby converting the octanoylated domains into lipoylated derivatives. The polypeptide is Lipoyl synthase (Rhodopseudomonas palustris (strain ATCC BAA-98 / CGA009)).